We begin with the raw amino-acid sequence, 272 residues long: ATP synthase subunit delta (272 aa).

The protein belongs to the ATPase delta chain family. As to quaternary structure, F-type ATPases have 2 components, F(1) - the catalytic core - and F(0) - the membrane proton channel. F(1) has five subunits: alpha(3), beta(3), gamma(1), delta(1), epsilon(1). F(0) has three main subunits: a(1), b(2) and c(10-14). The alpha and beta chains form an alternating ring which encloses part of the gamma chain. F(1) is attached to F(0) by a central stalk formed by the gamma and epsilon chains, while a peripheral stalk is formed by the delta and b chains.

It is found in the cell membrane. Its function is as follows. F(1)F(0) ATP synthase produces ATP from ADP in the presence of a proton or sodium gradient. F-type ATPases consist of two structural domains, F(1) containing the extramembraneous catalytic core and F(0) containing the membrane proton channel, linked together by a central stalk and a peripheral stalk. During catalysis, ATP synthesis in the catalytic domain of F(1) is coupled via a rotary mechanism of the central stalk subunits to proton translocation. In terms of biological role, this protein is part of the stalk that links CF(0) to CF(1). It either transmits conformational changes from CF(0) to CF(1) or is implicated in proton conduction. The sequence is that of ATP synthase subunit delta from Corynebacterium jeikeium (strain K411).